The primary structure comprises 33 residues: MSDIN-like toxin proprotein 6 (33 aa).

Residues 1–10 (MSDINATRLP) constitute a propeptide that is removed on maturation. The segment at residues 11-20 (LILLAALGIP) is a cross-link (cyclopeptide (Leu-Pro)). A propeptide spanning residues 21–33 (SDDADSTLTRGER) is cleaved from the precursor.

Belongs to the MSDIN fungal toxin family. Processed by the macrocyclase-peptidase enzyme POPB to yield a toxic cyclic decapeptide. POPB first removes 10 residues from the N-terminus. Conformational trapping of the remaining peptide forces the enzyme to release this intermediate rather than proceed to macrocyclization. The enzyme rebinds the remaining peptide in a different conformation and catalyzes macrocyclization of the N-terminal 10 residues.

In terms of biological role, probable toxin that belongs to the MSDIN-like toxin family responsible for a large number of food poisoning cases and deaths. This chain is MSDIN-like toxin proprotein 6, found in Amanita phalloides (Death cap).